Reading from the N-terminus, the 323-residue chain is tRNA U34 carboxymethyltransferase (323 aa).

Residues Lys-91, Trp-105, Lys-110, Gly-130, 152–154 (DPT), 181–182 (IE), Met-196, Tyr-200, and Arg-315 contribute to the carboxy-S-adenosyl-L-methionine site.

It belongs to the class I-like SAM-binding methyltransferase superfamily. CmoB family. Homotetramer.

It catalyses the reaction carboxy-S-adenosyl-L-methionine + 5-hydroxyuridine(34) in tRNA = 5-carboxymethoxyuridine(34) in tRNA + S-adenosyl-L-homocysteine + H(+). In terms of biological role, catalyzes carboxymethyl transfer from carboxy-S-adenosyl-L-methionine (Cx-SAM) to 5-hydroxyuridine (ho5U) to form 5-carboxymethoxyuridine (cmo5U) at position 34 in tRNAs. The chain is tRNA U34 carboxymethyltransferase from Salmonella enteritidis PT4 (strain P125109).